Reading from the N-terminus, the 253-residue chain is Ribosome-inactivating protein saporin-7 (253 aa).

Glu-176 is a catalytic residue.

It belongs to the ribosome-inactivating protein family. Type 1 RIP subfamily.

The catalysed reaction is Endohydrolysis of the N-glycosidic bond at one specific adenosine on the 28S rRNA.. Functionally, ribosome-inactivating protein of type 1, inhibits protein synthesis in animal cells. The polypeptide is Ribosome-inactivating protein saporin-7 (SAP7) (Saponaria officinalis (Common soapwort)).